The following is a 151-amino-acid chain: Caveolin-3 (151 aa).

Over 1–83 (MMAEEHTDLE…RLLSTLLGVP (83 aa)) the chain is Cytoplasmic. Residue lysine 38 forms a Glycyl lysine isopeptide (Lys-Gly) (interchain with G-Cter in SUMO3) linkage. Positions 64 to 114 (TFTVSKYWCYRLLSTLLGVPLALLWGFLFACISFCHIWAVVPCIKSYLIEI) are required for interaction with DAG1. The helical intramembrane region spans 84 to 104 (LALLWGFLFACISFCHIWAVV). Over 105 to 151 (PCIKSYLIEIQCISHIYSLCIRTFCNPLFAALGQVCSSIKVVLRKEV) the chain is Cytoplasmic.

Belongs to the caveolin family. In terms of assembly, homooligomer. Interacts with DLG1 and KCNA5; forms a ternary complex. Interacts with TRIM72. Interacts with MUSK; may regulate MUSK signaling. Interacts with DAG1 (via its C-terminal); the interaction prevents binding of DAG1 with DMD. Interacts with DYSF. Interacts with POPDC1. Interacts with CAVIN1 and CAVIN2. Interacts with CAVIN4. Post-translationally, sumoylation with SUMO3 by PIAS4 may reduce agonist-induced internalization and desensitization of adrenergic receptor ABRD2. Expressed predominantly in muscle.

Its subcellular location is the golgi apparatus membrane. The protein localises to the cell membrane. It localises to the membrane. The protein resides in the caveola. It is found in the sarcolemma. In terms of biological role, may act as a scaffolding protein within caveolar membranes. Interacts directly with G-protein alpha subunits and can functionally regulate their activity. May also regulate voltage-gated potassium channels. Plays a role in the sarcolemma repair mechanism of both skeletal muscle and cardiomyocytes that permits rapid resealing of membranes disrupted by mechanical stress. Mediates the recruitment of CAVIN2 and CAVIN3 proteins to the caveolae. The protein is Caveolin-3 (CAV3) of Homo sapiens (Human).